A 107-amino-acid polypeptide reads, in one-letter code: MLSKGRSPRRKQVQTQRKAALVLSVTPMVPVGSVWLAMSSVLSAFMRELPGWFLFFGVFLPVTLLLLLLIAYFRIKLIEVNEELSQNCDRQHNPKDGSSLYQRMKWT.

2 helical membrane-spanning segments follow: residues 19–39 (AALV…LAMS) and 53–73 (FLFF…IAYF). Residues 85–107 (SQNCDRQHNPKDGSSLYQRMKWT) form a disordered region.

The protein localises to the membrane. In Homo sapiens (Human), this protein is Small leucine-rich protein 1 (SMLR1).